We begin with the raw amino-acid sequence, 179 residues long: Large ribosomal subunit protein uL5 (179 aa).

It belongs to the universal ribosomal protein uL5 family. In terms of assembly, part of the 50S ribosomal subunit; part of the 5S rRNA/L5/L18/L25 subcomplex. Contacts the 5S rRNA and the P site tRNA. Forms a bridge to the 30S subunit in the 70S ribosome.

Functionally, this is one of the proteins that bind and probably mediate the attachment of the 5S RNA into the large ribosomal subunit, where it forms part of the central protuberance. In the 70S ribosome it contacts protein S13 of the 30S subunit (bridge B1b), connecting the 2 subunits; this bridge is implicated in subunit movement. Contacts the P site tRNA; the 5S rRNA and some of its associated proteins might help stabilize positioning of ribosome-bound tRNAs. The chain is Large ribosomal subunit protein uL5 from Pseudomonas putida (strain ATCC 700007 / DSM 6899 / JCM 31910 / BCRC 17059 / LMG 24140 / F1).